The primary structure comprises 340 residues: Cell division protein FtsQ (340 aa).

Residues 1–41 are disordered; sequence MQGLNPFHRDQGAGGRPAPVRPAPARPAPVAPRTPRKDPAP. Residues 1-55 lie on the Cytoplasmic side of the membrane; sequence MQGLNPFHRDQGAGGRPAPVRPAPARPAPVAPRTPRKDPAPSRLAYRLNRMMLRP. A compositionally biased stretch (pro residues) spans 19 to 32; the sequence is PVRPAPARPAPVAP. Residues 56-78 form a helical membrane-spanning segment; that stretch reads LVRRLVHVGLPAFLAALVAGIWL. Topologically, residues 79–340 are periplasmic; the sequence is SDDTRRANLT…NAAKAKKKSG (262 aa). The 69-residue stretch at 104-172 folds into the POTRA domain; that stretch reads FMVKMMTIEG…GVLSAVVTER (69 aa). Residues 308-340 form a disordered region; it reads RQARGQPELGPDGTPLAPEATAGNAAKAKKKSG. Low complexity predominate over residues 324-333; sequence APEATAGNAA.

Belongs to the FtsQ/DivIB family. FtsQ subfamily.

It localises to the cell inner membrane. Its function is as follows. Essential cell division protein. This is Cell division protein FtsQ from Paracoccus denitrificans (strain Pd 1222).